The chain runs to 73 residues: U-scoloptoxin(03)-Ssd1b (73 aa).

An N-terminal signal peptide occupies residues 1-23 (MKSSMAVLLVMGLIIFTLDKCYS).

In terms of processing, contains 3 disulfide bonds. In terms of tissue distribution, expressed by the venom gland.

It localises to the secreted. This Scolopendra dehaani (Thai centipede) protein is U-scoloptoxin(03)-Ssd1b.